A 943-amino-acid chain; its full sequence is Leucine--tRNA ligase (943 aa).

The 'HIGH' region motif lies at Pro40–His51. The 'KMSKS' region signature appears at Lys717–Ser721. Residue Lys720 participates in ATP binding.

Belongs to the class-I aminoacyl-tRNA synthetase family.

The protein resides in the cytoplasm. It carries out the reaction tRNA(Leu) + L-leucine + ATP = L-leucyl-tRNA(Leu) + AMP + diphosphate. In Bacteroides fragilis (strain ATCC 25285 / DSM 2151 / CCUG 4856 / JCM 11019 / LMG 10263 / NCTC 9343 / Onslow / VPI 2553 / EN-2), this protein is Leucine--tRNA ligase.